We begin with the raw amino-acid sequence, 78 residues long: Putative DNA-binding protein MT0521 (78 aa).

Positions 24–45 form a DNA-binding region, H-T-H motif; that stretch reads LLTVAEVAALMRVSKMTVYRLV.

This Mycobacterium tuberculosis (strain CDC 1551 / Oshkosh) protein is Putative DNA-binding protein MT0521.